A 352-amino-acid chain; its full sequence is Protein Wnt-3a (352 aa).

The N-terminal stretch at 1 to 18 (MAPLGYFLLLCSLKQALG) is a signal peptide. Disulfide bonds link Cys-77–Cys-88, Cys-128–Cys-136, Cys-138–Cys-155, Cys-203–Cys-217, Cys-205–Cys-212, Cys-281–Cys-312, Cys-297–Cys-307, Cys-311–Cys-351, Cys-327–Cys-342, Cys-329–Cys-339, and Cys-334–Cys-335. Asn-87 carries an N-linked (GlcNAc...) asparagine glycan. Residue Ser-209 is the site of O-palmitoleoyl serine; by PORCN attachment. N-linked (GlcNAc...) asparagine glycosylation is present at Asn-298.

Belongs to the Wnt family. In terms of assembly, forms a soluble 1:1 complex with AFM; this prevents oligomerization and is required for prolonged biological activity. The complex with AFM may represent the physiological form in body fluids. Homooligomer; disulfide-linked, leading to inactivation. Interacts with PORCN. Interacts with APCDD1 and WLS. Component of the Wnt-Fzd-LRP5-LRP6 signaling complex that contains a WNT protein, a FZD protein and LRP5 or LRP6. Interacts directly in the complex with LRP6. Interacts with glypican GPC3. Interacts with PKD1 (via extracellular domain). Interacts with FZD5. Post-translationally, palmitoleoylation by PORCN is required for efficient binding to frizzled receptors. Palmitoleoylation is required for proper trafficking to cell surface, vacuolar acidification is critical to release palmitoleoylated WNT3A from WLS in secretory vesicles. Depalmitoleoylated by NOTUM, leading to inhibit Wnt signaling pathway, possibly by promoting disulfide bond formation and oligomerization. In terms of processing, proteolytic processing by TIKI1 and TIKI2 promotes oxidation and formation of large disulfide-bond oligomers, leading to inactivation of WNT3A. Disulfide bonds have critical and distinct roles in secretion and activity. Loss of each conserved cysteine in WNT3A results in high molecular weight oxidized Wnt oligomers, which are formed through inter-Wnt disulfide bonding. In terms of tissue distribution, moderately expressed in placenta and at low levels in adult lung, spleen, and prostate.

Its subcellular location is the secreted. It localises to the extracellular space. It is found in the extracellular matrix. In terms of biological role, ligand for members of the frizzled family of seven transmembrane receptors. Functions in the canonical Wnt signaling pathway that results in activation of transcription factors of the TCF/LEF family. Required for normal embryonic mesoderm development and formation of caudal somites. Required for normal morphogenesis of the developing neural tube. Mediates self-renewal of the stem cells at the bottom on intestinal crypts (in vitro). In Homo sapiens (Human), this protein is Protein Wnt-3a (WNT3A).